The chain runs to 148 residues: Large ribosomal subunit protein bL9 (148 aa).

This sequence belongs to the bacterial ribosomal protein bL9 family.

Binds to the 23S rRNA. This Acetivibrio thermocellus (strain ATCC 27405 / DSM 1237 / JCM 9322 / NBRC 103400 / NCIMB 10682 / NRRL B-4536 / VPI 7372) (Clostridium thermocellum) protein is Large ribosomal subunit protein bL9.